Reading from the N-terminus, the 596-residue chain is uncharacterized protein (596 aa).

Positions 1 to 31 (MSTSNDPVVSSHDPIKQEKEQETDLEAQVEH) are disordered. The Cytoplasmic segment spans residues 1-37 (MSTSNDPVVSSHDPIKQEKEQETDLEAQVEHKKRNER). Over residues 13–22 (DPIKQEKEQE) the composition is skewed to basic and acidic residues. The chain crosses the membrane as a helical span at residues 38 to 58 (GNAFVGFLILIFVYYLLRGGS). Residues 59-596 (NDNDKQEMSH…ILVSDSGEEA (538 aa)) are Lumenal-facing. An N-linked (GlcNAc...) asparagine glycan is attached at asparagine 118. Zn(2+) is bound at residue histidine 197. Residue aspartate 199 is part of the active site. Aspartate 232 is a binding site for Zn(2+). Glutamate 266 functions as the Proton acceptor in the catalytic mechanism. Zn(2+) is bound by residues glutamate 267 and aspartate 295. N-linked (GlcNAc...) asparagine glycans are attached at residues asparagine 466, asparagine 541, and asparagine 555. Histidine 565 serves as a coordination point for Zn(2+).

The protein belongs to the peptidase M20A family. It depends on Zn(2+) as a cofactor.

It is found in the vacuole membrane. This is an uncharacterized protein from Schizosaccharomyces pombe (strain 972 / ATCC 24843) (Fission yeast).